The chain runs to 258 residues: Snake venom serine protease PA (258 aa).

A signal peptide spans methionine 1–alanine 18. The propeptide occupies glutamine 19–leucine 24. Positions valine 25–alanine 249 constitute a Peptidase S1 domain. 6 cysteine pairs are disulfide-bonded: cysteine 31/cysteine 163, cysteine 50/cysteine 66, cysteine 98/cysteine 256, cysteine 142/cysteine 210, cysteine 174/cysteine 189, and cysteine 200/cysteine 225. Asparagine 44 is a glycosylation site (N-linked (GlcNAc...) asparagine). Catalysis depends on charge relay system residues histidine 65 and aspartate 110. Serine 204 acts as the Charge relay system in catalysis.

This sequence belongs to the peptidase S1 family. Snake venom subfamily. In terms of assembly, monomer. Expressed by the venom gland.

The protein resides in the secreted. Its function is as follows. Snake venom serine protease that may act in the hemostasis system of the prey. The protein is Snake venom serine protease PA of Trimeresurus stejnegeri (Chinese green tree viper).